Consider the following 159-residue polypeptide: 2-C-methyl-D-erythritol 2,4-cyclodiphosphate synthase (159 aa).

Positions 10 and 12 each coordinate a divalent metal cation. Residues 10-12 (DVH) and 36-37 (HS) contribute to the 4-CDP-2-C-methyl-D-erythritol 2-phosphate site. A divalent metal cation is bound at residue His-44. Residues 58-60 (DIG), 63-67 (FPDTD), 102-108 (AQAPKMA), 134-137 (TTTE), Phe-141, and Arg-144 contribute to the 4-CDP-2-C-methyl-D-erythritol 2-phosphate site.

Belongs to the IspF family. In terms of assembly, homotrimer. Requires a divalent metal cation as cofactor.

The catalysed reaction is 4-CDP-2-C-methyl-D-erythritol 2-phosphate = 2-C-methyl-D-erythritol 2,4-cyclic diphosphate + CMP. The protein operates within isoprenoid biosynthesis; isopentenyl diphosphate biosynthesis via DXP pathway; isopentenyl diphosphate from 1-deoxy-D-xylulose 5-phosphate: step 4/6. Its function is as follows. Involved in the biosynthesis of isopentenyl diphosphate (IPP) and dimethylallyl diphosphate (DMAPP), two major building blocks of isoprenoid compounds. Catalyzes the conversion of 4-diphosphocytidyl-2-C-methyl-D-erythritol 2-phosphate (CDP-ME2P) to 2-C-methyl-D-erythritol 2,4-cyclodiphosphate (ME-CPP) with a corresponding release of cytidine 5-monophosphate (CMP). This Idiomarina loihiensis (strain ATCC BAA-735 / DSM 15497 / L2-TR) protein is 2-C-methyl-D-erythritol 2,4-cyclodiphosphate synthase.